Here is a 315-residue protein sequence, read N- to C-terminus: Porphobilinogen deaminase (315 aa).

At Cys241 the chain carries S-(dipyrrolylmethanemethyl)cysteine.

This sequence belongs to the HMBS family. As to quaternary structure, monomer. Requires dipyrromethane as cofactor.

The catalysed reaction is 4 porphobilinogen + H2O = hydroxymethylbilane + 4 NH4(+). It functions in the pathway porphyrin-containing compound metabolism; protoporphyrin-IX biosynthesis; coproporphyrinogen-III from 5-aminolevulinate: step 2/4. Its function is as follows. Tetrapolymerization of the monopyrrole PBG into the hydroxymethylbilane pre-uroporphyrinogen in several discrete steps. The protein is Porphobilinogen deaminase of Nitratidesulfovibrio vulgaris (strain ATCC 29579 / DSM 644 / CCUG 34227 / NCIMB 8303 / VKM B-1760 / Hildenborough) (Desulfovibrio vulgaris).